The sequence spans 71 residues: Translation initiation factor IF-1 (71 aa).

The S1-like domain maps to 1 to 71; it reads MKEKNIEMQG…SKGRIIFRSR (71 aa).

This sequence belongs to the IF-1 family. In terms of assembly, component of the 30S ribosomal translation pre-initiation complex which assembles on the 30S ribosome in the order IF-2 and IF-3, IF-1 and N-formylmethionyl-tRNA(fMet); mRNA recruitment can occur at any time during PIC assembly.

It is found in the cytoplasm. Its function is as follows. One of the essential components for the initiation of protein synthesis. Stabilizes the binding of IF-2 and IF-3 on the 30S subunit to which N-formylmethionyl-tRNA(fMet) subsequently binds. Helps modulate mRNA selection, yielding the 30S pre-initiation complex (PIC). Upon addition of the 50S ribosomal subunit IF-1, IF-2 and IF-3 are released leaving the mature 70S translation initiation complex. This is Translation initiation factor IF-1 from Buchnera aphidicola subsp. Cinara cedri (strain Cc).